The following is a 350-amino-acid chain: Protein-glutamate methylesterase/protein-glutamine glutaminase 1 (350 aa).

Residues 1 to 116 (MVVDDSAVVR…KGFLHDSAKV (116 aa)) enclose the Response regulatory domain. Aspartate 50 carries the 4-aspartylphosphate modification. Residues 160 to 350 (LKTTEQLVAI…IPQAILDCSH (191 aa)) enclose the CheB-type methylesterase domain. Catalysis depends on residues serine 172, histidine 198, and aspartate 294.

This sequence belongs to the CheB family. In terms of processing, phosphorylated by CheA. Phosphorylation of the N-terminal regulatory domain activates the methylesterase activity.

The protein localises to the cytoplasm. The catalysed reaction is [protein]-L-glutamate 5-O-methyl ester + H2O = L-glutamyl-[protein] + methanol + H(+). It catalyses the reaction L-glutaminyl-[protein] + H2O = L-glutamyl-[protein] + NH4(+). Its function is as follows. Involved in chemotaxis. Part of a chemotaxis signal transduction system that modulates chemotaxis in response to various stimuli. Catalyzes the demethylation of specific methylglutamate residues introduced into the chemoreceptors (methyl-accepting chemotaxis proteins or MCP) by CheR. Also mediates the irreversible deamidation of specific glutamine residues to glutamic acid. This is Protein-glutamate methylesterase/protein-glutamine glutaminase 1 from Photobacterium profundum (strain SS9).